A 473-amino-acid polypeptide reads, in one-letter code: Vasculin (473 aa).

Disordered stretches follow at residues 1–25 (MAQH…SSLN), 45–169 (RRHN…KSRA), and 191–342 (VGNL…QERD). Position 49 is a phosphoserine (serine 49). An Omega-N-methylarginine modification is found at arginine 87. A compositionally biased stretch (low complexity) spans 93–107 (GSSRSRSSIFHSGKS). The span at 119-133 (ETGRKEDKRERKQFE) shows a compositional bias: basic and acidic residues. 2 stretches are compositionally biased toward polar residues: residues 194-204 (LPSQPVKNGTG) and 251-286 (AFKS…QQPR). Phosphoserine is present on residues serine 274, serine 276, serine 322, and serine 381. Residues 293 to 329 (MRTDKKSEFLKALKRDRVEEEHEDESRAGSEKDDDSF) are compositionally biased toward basic and acidic residues. Residues 444-473 (GPWKNSTFKPTTENDDTETSSSDTSDDDDV) form a disordered region. The segment covering 456–473 (ENDDTETSSSDTSDDDDV) has biased composition (acidic residues).

Belongs to the vasculin family. In terms of assembly, interacts with GTF2B, GTF2F2, RNA polymerase II and TBP.

It localises to the nucleus. In terms of biological role, functions as a GC-rich promoter-specific transactivating transcription factor. In Pongo abelii (Sumatran orangutan), this protein is Vasculin (GPBP1).